The following is a 351-amino-acid chain: UDP-N-acetylglucosamine transporter slc35b4 (351 aa).

Transmembrane regions (helical) follow at residues 6–26, 37–57, 77–97, 104–124, 136–156, 173–193, 209–229, 252–274, 282–302, and 306–326; these read LISL…VISL, AILV…FVNI, IPLK…VLNN, IPIP…IVIG, QILS…SSMP, FSIG…LGLI, TIFY…DDIL, TLWV…VFIL, TCTL…VIYF, and FTSL…MYST.

Belongs to the nucleotide-sugar transporter family. SLC35B subfamily.

The protein resides in the golgi apparatus membrane. Its function is as follows. Sugar transporter that specifically mediates the transport of UDP-N-acetylglucosamine (UDP-GlcNAc) from cytosol into Golgi. The protein is UDP-N-acetylglucosamine transporter slc35b4 (slc35b4) of Dictyostelium discoideum (Social amoeba).